Reading from the N-terminus, the 230-residue chain is Interleukin-6 (230 aa).

The N-terminal stretch at Met1–Gly24 is a signal peptide. A disulfide bridge links Cys96 with Cys106. Asn100 carries an N-linked (GlcNAc...) asparagine glycan. Positions Arg206 to Gly218 are enriched in basic and acidic residues. Residues Arg206–Thr230 are disordered.

This sequence belongs to the IL-6 superfamily. Component of a hexamer of two molecules each of IL6, IL6R and IL6ST; first binds to IL6R to associate with the signaling subunit IL6ST. Expressed in kidney and spleen. Low expression in liver and gills.

Its subcellular location is the secreted. Functionally, cytokine with a wide variety of biological functions in immunity, tissue regeneration, and metabolism. Binds to IL6R, then the complex associates to the signaling subunit IL6ST/gp130 to trigger the intracellular IL6-signaling pathway. The interaction with the membrane-bound IL6R and IL6ST stimulates 'classic signaling', whereas the binding of IL6 and soluble IL6R to IL6ST stimulates 'trans-signaling'. Alternatively, 'cluster signaling' occurs when membrane-bound IL6:IL6R complexes on transmitter cells activate IL6ST receptors on neighboring receiver cells. The protein is Interleukin-6 (il6) of Paralichthys olivaceus (Bastard halibut).